A 380-amino-acid polypeptide reads, in one-letter code: D-threo-3-hydroxyaspartate dehydratase (380 aa).

An N6-(pyridoxal phosphate)lysine modification is found at Lys-43.

This sequence belongs to the DSD1 family. In terms of assembly, monomer. The cofactor is pyridoxal 5'-phosphate. Requires Mn(2+) as cofactor. Co(2+) is required as a cofactor. It depends on Ni(2+) as a cofactor.

The catalysed reaction is (3R)-3-hydroxy-D-aspartate = oxaloacetate + NH4(+). Its activity is regulated as follows. Strongly inhibited by hydroxylamine. Modestly inhibited by EDTA. Its function is as follows. Catalyzes the deamination of D-threo-3-hydroxyaspartate (D-THA). Also exhibits dehydratase activity towards L-threo-3-hydroxyaspartate (L-THA), L-erythro-3-hydroxyaspartate (L-EHA) and D-serine. This chain is D-threo-3-hydroxyaspartate dehydratase (dthadh), found in Delftia sp. (strain HT23).